Here is a 136-residue protein sequence, read N- to C-terminus: Large ribosomal subunit protein bL17 (136 aa).

This sequence belongs to the bacterial ribosomal protein bL17 family. As to quaternary structure, part of the 50S ribosomal subunit. Contacts protein L32.

In Rickettsia africae (strain ESF-5), this protein is Large ribosomal subunit protein bL17.